The primary structure comprises 417 residues: Sterile alpha motif domain-containing protein 14 (417 aa).

2 disordered regions span residues 37–299 (LLAK…WQEA) and 388–417 (AAAEKERKAQEKAARQREKLRRREQEAKKS). Residues 40–49 (KGRRHRPSRS) are compositionally biased toward basic residues. 2 positions are modified to phosphoserine: Ser84 and Ser108. The span at 135–153 (AAASCSPPRSAPSSDSSPS) shows a compositional bias: low complexity. Basic and acidic residues predominate over residues 160–173 (RAEPHSEDDSRDAS). 2 positions are modified to phosphoserine: Ser173 and Ser179. Composition is skewed to low complexity over residues 244-260 (SGKGSASSGSTTSPTCS) and 276-295 (STLSDDSTPPSSSPKIPSGP). Ser279 is modified (phosphoserine). Phosphothreonine is present on Thr283. One can recognise an SAM domain in the interval 326 to 389 (WTSQQVGQWL…KRKLKEMAAA (64 aa)). Residues 377–417 (ALVKRKLKEMAAAAEKERKAQEKAARQREKLRRREQEAKKS) adopt a coiled-coil conformation. Residues 390 to 417 (AEKERKAQEKAARQREKLRRREQEAKKS) are compositionally biased toward basic and acidic residues.

This is Sterile alpha motif domain-containing protein 14 (SAMD14) from Homo sapiens (Human).